Reading from the N-terminus, the 647-residue chain is MRLTLLCCTWREERMGEEGSELPVCASCGQRIYDGQYLQALNADWHADCFRCCDCSASLSHQYYEKDGQLFCKKDYWARYGESCHGCSEQITKGLVMVAGELKYHPECFICLTCGTFIGDGDTYTLVEHSKLYCGHCYYQTVVTPVIEQILPDSPGSHLPHTVTLVSIPASSHGKRGLSVSIDPPHGPPGCGTEHSHTVRVQGVDPGCMSPDVKNSIHVGDRILEINGTPIRNVPLDEIDLLIQETSRLLQLTLEHDPHDTLGHGLGPETSPLSSPAYTPSGEAGSSARQKPVLRSCSIDRSPGAGSLGSPASQRKDLGRSESLRVVCRPHRIFRPSDLIHGEVLGKGCFGQAIKVTHRETGEVMVMKELIRFDEETQRTFLKEVKVMRCLEHPNVLKFIGVLYKDKRLNFITEYIKGGTLRGIIKSMDSQYPWSQRVSFAKDIASGMAYLHSMNIIHRDLNSHNCLVRENKNVVVADFGLARLMVDEKTQPEGLRSLKKPDRKKRYTVVGNPYWMAPEMINGRSYDEKVDVFSFGIVLCEIIGRVNADPDYLPRTMDFGLNVRGFLDRYCPPNCPPSFFPITVRCCDLDPEKRPSFVKLEHWLETLRMHLAGHLPLGPQLEQLDRGFWETYRRGESGLPAHPEVPD.

LIM zinc-binding domains lie at 25–75 (CASC…CKKD) and 84–137 (CHGC…CGHC). The PDZ domain occupies 165-258 (LVSIPASSHG…LLQLTLEHDP (94 aa)). Serine 210 bears the Phosphoserine mark. Threonine 229 bears the Phosphothreonine mark. The segment at 260-319 (DTLGHGLGPETSPLSSPAYTPSGEAGSSARQKPVLRSCSIDRSPGAGSLGSPASQRKDLG) is disordered. Residues serine 298, serine 302, serine 307, and serine 310 each carry the phosphoserine modification. A compositionally biased stretch (low complexity) spans 302–313 (SPGAGSLGSPAS). Phosphoserine; by MAPKAPK2 is present on serine 323. The residue at position 337 (serine 337) is a Phosphoserine. The Protein kinase domain occupies 339–604 (LIHGEVLGKG…PSFVKLEHWL (266 aa)). ATP-binding positions include 345 to 353 (LGKGCFGQA) and lysine 368. Residue aspartate 460 is part of the active site. Threonine 508 bears the Phosphothreonine; by ROCK1 and PAK1 mark.

It belongs to the protein kinase superfamily. TKL Ser/Thr protein kinase family. As to quaternary structure, interacts (via LIM domain) with the cytoplasmic domain of NRG1. Interacts with NISCH. Interacts with RLIM and RNF6. Self-associates to form homodimers. Interacts with HSP90AA1; this interaction promotes LIMK1 dimerization and subsequent transphosphorylation. Interacts with CDKN1C. Interacts with SSH1. Interacts with ROCK1. Interacts (via LIM zinc-binding domains) with FAM89B/LRAP25 (via LRR repeat). Forms a tripartite complex with CDC42BPA, CDC42BPB and FAM89B/LRAP25. Autophosphorylated. Phosphorylated on Thr-508 by ROCK1 and PAK1, resulting in activation. Phosphorylated by PAK4 which increases the ability of LIMK1 to phosphorylate cofilin. Phosphorylated at Ser-323 by MAPKAPK2 during activation of VEGFA-induced signaling, which results in activation of LIMK1 and promotion of actin reorganization, cell migration, and tubule formation of endothelial cells. Dephosphorylated and inactivated by SSH1. Phosphorylated by CDC42BP. In terms of processing, ubiquitinated. 'Lys-48'-linked polyubiquitination by RNF6 leads to proteasomal degradation through the 26S proteasome, modulating LIMK1 levels in the growth cone and its effect on axonal outgrowth. Also polyubiquitinated by RLIM. In terms of tissue distribution, highest expression in both adult and fetal nervous system. Detected ubiquitously throughout the different regions of adult brain, with highest levels in the cerebral cortex. Expressed to a lesser extent in heart and skeletal muscle.

The protein localises to the cytoplasm. The protein resides in the nucleus. Its subcellular location is the cytoskeleton. It localises to the cell projection. It is found in the lamellipodium. It carries out the reaction L-seryl-[protein] + ATP = O-phospho-L-seryl-[protein] + ADP + H(+). The enzyme catalyses L-threonyl-[protein] + ATP = O-phospho-L-threonyl-[protein] + ADP + H(+). Functionally, serine/threonine-protein kinase that plays an essential role in the regulation of actin filament dynamics. Acts downstream of several Rho family GTPase signal transduction pathways. Activated by upstream kinases including ROCK1, PAK1 and PAK4, which phosphorylate LIMK1 on a threonine residue located in its activation loop. LIMK1 subsequently phosphorylates and inactivates the actin binding/depolymerizing factors cofilin-1/CFL1, cofilin-2/CFL2 and destrin/DSTN, thereby preventing the cleavage of filamentous actin (F-actin), and stabilizing the actin cytoskeleton. In this way LIMK1 regulates several actin-dependent biological processes including cell motility, cell cycle progression, and differentiation. Phosphorylates TPPP on serine residues, thereby promoting microtubule disassembly. Stimulates axonal outgrowth and may be involved in brain development. Its function is as follows. Has a dominant negative effect on actin cytoskeletal changes. Required for atypical chemokine receptor ACKR2-induced phosphorylation of cofilin (CFL1). The sequence is that of LIM domain kinase 1 (LIMK1) from Homo sapiens (Human).